A 319-amino-acid polypeptide reads, in one-letter code: D-ribose/D-allose-binding protein (319 aa).

Positions 1–29 are cleaved as a signal peptide; it reads MKRVASRRLLAAVVLTACSSFLPLSAVHA.

Belongs to the bacterial solute-binding protein 2 family.

It is found in the periplasm. Binds specifically both D-ribose and D-allose, with affinities in the lower micromolar range. In Pseudomonas aeruginosa (strain ATCC 15692 / DSM 22644 / CIP 104116 / JCM 14847 / LMG 12228 / 1C / PRS 101 / PAO1), this protein is D-ribose/D-allose-binding protein.